The sequence spans 136 residues: Keratin-associated protein 4-2 (136 aa).

20 repeat units span residues 5–9 (CCGSV), 20–24 (CCRPS), 25–29 (CCQTT), 30–34 (CCRTT), 35–39 (CCRPS), 40–44 (CCVSS), 45–49 (CCRPQ), 50–54 (CCQSV), 55–59 (CCQPT), 60–64 (CCSPS), 65–69 (CCQTT), 70–74 (CCRTT), 75–79 (CCRPS), 80–84 (CCVSS), 90–94 (CCQSV), 95–99 (YCQPT), 100–104 (CCRPS), 110–114 (CCRTT), 120–124 (CCVST), and 125–129 (CCRPT). A 20 X 5 AA repeats OF C-C-[GRQVS]-[SPT]-[VSTQ] region spans residues 5-129 (CCGSVCSDQG…CCVSTCCRPT (125 aa)).

The protein belongs to the KRTAP type 4 family. As to quaternary structure, interacts with hair keratins.

In terms of biological role, in the hair cortex, hair keratin intermediate filaments are embedded in an interfilamentous matrix, consisting of hair keratin-associated proteins (KRTAP), which are essential for the formation of a rigid and resistant hair shaft through their extensive disulfide bond cross-linking with abundant cysteine residues of hair keratins. The matrix proteins include the high-sulfur and high-glycine-tyrosine keratins. This chain is Keratin-associated protein 4-2 (KRTAP4-2), found in Homo sapiens (Human).